The chain runs to 355 residues: MSLPRIALDAMGGDVGVRVMIDGAAEARRRHDRFKFLLVGDETRIKAALDTHPNMRGASEILHCEDVVGGDEKPTQALRRAKTTSMGLTVNAVKQGEAGAAVSAGNTGALMAMSKLALRTMPGIDRPALAGVMPTLEEDDVVMLDLGANTEADARNLVQFAIMGAAYSRILTGREEPRVRLLNIGTEEIKGTDALRDAAAQLQDAAGLAMQFDGFVESDKINRGQVDVVVTDGFSGNIALKAIEGAARFVTDLLRNAFTSSIRSKVGFLVSRPATELLKHHLDPNNHNGAVFLGLNGVVVKSHGSANSVGVANAVAVAASLLENDLTARIASDLAELGERMWDATGGNGNGPAPK.

Belongs to the PlsX family. Homodimer. Probably interacts with PlsY.

Its subcellular location is the cytoplasm. It catalyses the reaction a fatty acyl-[ACP] + phosphate = an acyl phosphate + holo-[ACP]. The protein operates within lipid metabolism; phospholipid metabolism. Its function is as follows. Catalyzes the reversible formation of acyl-phosphate (acyl-PO(4)) from acyl-[acyl-carrier-protein] (acyl-ACP). This enzyme utilizes acyl-ACP as fatty acyl donor, but not acyl-CoA. The chain is Phosphate acyltransferase from Erythrobacter litoralis (strain HTCC2594).